Here is a 280-residue protein sequence, read N- to C-terminus: 1-cyclohexenylcarbonyl-CoA reductase (280 aa).

NADP(+)-binding positions include 22–25 (SRGI), 71–72 (DV), and Asn98. Active-site proton acceptor residues include Tyr158 and Lys165. Residues Lys165 and 194-196 (IDS) contribute to the NADP(+) site.

This sequence belongs to the short-chain dehydrogenases/reductases (SDR) family. In terms of assembly, homodimer.

It catalyses the reaction (4R,5R)-4,5-dihydroxycyclohex-2-ene-1-carbonyl-CoA + NADP(+) = (3R,4R)-3,4-dihydroxycyclohexa-1,5-diene-1-carbonyl-CoA + NADPH + H(+). The catalysed reaction is (3S)-3-hydroxycyclohexane-1-carbonyl-CoA + NADP(+) = (5S)-5-hydroxycyclohex-1-ene-1-carbonyl-CoA + NADPH + H(+). The enzyme catalyses cyclohexane-1-carbonyl-CoA + NADP(+) = cyclohex-1-ene-1-carbonyl-CoA + NADPH + H(+). It functions in the pathway antibiotic biosynthesis. Its activity is regulated as follows. Inhibited by the thiol inhibitors p-chloromercuribenzoate, N-ethylmaleimide and iodoacetamide. Also inhibited by various divalent cations. In terms of biological role, involved in the biosynthesis of the antifungal antibiotic ansatrienin A (mycotrienin I). Catalyzes three of the reductive steps involved in the formation of the cyclohexanecarboxylic acid (CHC) moiety of ansatrienin from shikimic acid. Can use 3,4-dihydroxycyclohexa-1,5-diene-1-carbonyl-CoA, 5-hydroxycyclohex-1-ene-1-carbonyl-CoA and cyclohex-1-ene-1-carbonyl-CoA as substrates. This Streptomyces collinus protein is 1-cyclohexenylcarbonyl-CoA reductase.